We begin with the raw amino-acid sequence, 420 residues long: Serine--tRNA ligase (420 aa).

228–230 contacts L-serine; the sequence is TAE. 259 to 261 is an ATP binding site; sequence RSE. L-serine is bound at residue glutamate 282. Residue 346–349 participates in ATP binding; that stretch reads EISS. L-serine is bound at residue serine 382.

Belongs to the class-II aminoacyl-tRNA synthetase family. Type-1 seryl-tRNA synthetase subfamily. In terms of assembly, homodimer. The tRNA molecule binds across the dimer.

Its subcellular location is the cytoplasm. It carries out the reaction tRNA(Ser) + L-serine + ATP = L-seryl-tRNA(Ser) + AMP + diphosphate + H(+). The catalysed reaction is tRNA(Sec) + L-serine + ATP = L-seryl-tRNA(Sec) + AMP + diphosphate + H(+). It functions in the pathway aminoacyl-tRNA biosynthesis; selenocysteinyl-tRNA(Sec) biosynthesis; L-seryl-tRNA(Sec) from L-serine and tRNA(Sec): step 1/1. Its function is as follows. Catalyzes the attachment of serine to tRNA(Ser). Is also able to aminoacylate tRNA(Sec) with serine, to form the misacylated tRNA L-seryl-tRNA(Sec), which will be further converted into selenocysteinyl-tRNA(Sec). The chain is Serine--tRNA ligase from Mycoplasmoides gallisepticum (strain R(low / passage 15 / clone 2)) (Mycoplasma gallisepticum).